Here is a 318-residue protein sequence, read N- to C-terminus: NADH-ubiquinone oxidoreductase chain 1 (318 aa).

8 helical membrane-spanning segments follow: residues 2–22 (FMIN…FLTL), 68–88 (ITMF…MWTP), 100–120 (LGVL…LWSG), 146–166 (LAII…PALI), 171–191 (HMWL…STLA), 222–242 (LFFL…TILF), 253–273 (ELYT…FLWV), and 294–314 (LPLT…TAGI).

This sequence belongs to the complex I subunit 1 family.

It is found in the mitochondrion inner membrane. The catalysed reaction is a ubiquinone + NADH + 5 H(+)(in) = a ubiquinol + NAD(+) + 4 H(+)(out). Core subunit of the mitochondrial membrane respiratory chain NADH dehydrogenase (Complex I) that is believed to belong to the minimal assembly required for catalysis. Complex I functions in the transfer of electrons from NADH to the respiratory chain. The immediate electron acceptor for the enzyme is believed to be ubiquinone. The protein is NADH-ubiquinone oxidoreductase chain 1 (MT-ND1) of Coelops frithii (East Asian tailless leaf-nosed bat).